Consider the following 154-residue polypeptide: Putative NADPH-dependent 7-cyano-7-deazaguanine reductase (154 aa).

Catalysis depends on Asp52, which acts as the Proton donor. Substrate is bound by residues 67-69 and 86-87; these read VES and HE.

The protein belongs to the GTP cyclohydrolase I family. QueF type 1 subfamily.

The protein localises to the cytoplasm. It catalyses the reaction 7-aminomethyl-7-carbaguanine + 2 NADP(+) = 7-cyano-7-deazaguanine + 2 NADPH + 3 H(+). Its pathway is tRNA modification; tRNA-queuosine biosynthesis. Catalyzes the NADPH-dependent reduction of 7-cyano-7-deazaguanine (preQ0) to 7-aminomethyl-7-deazaguanine (preQ1). In Streptococcus pneumoniae (strain ATCC BAA-255 / R6), this protein is Putative NADPH-dependent 7-cyano-7-deazaguanine reductase.